Consider the following 398-residue polypeptide: Glutamyl-tRNA reductase (398 aa).

Substrate is bound by residues 45 to 48 (TCNR), S88, 93 to 95 (EDQ), and Q99. Catalysis depends on C46, which acts as the Nucleophile. Residue 168-173 (GAGKMG) participates in NADP(+) binding.

This sequence belongs to the glutamyl-tRNA reductase family. In terms of assembly, homodimer.

It catalyses the reaction (S)-4-amino-5-oxopentanoate + tRNA(Glu) + NADP(+) = L-glutamyl-tRNA(Glu) + NADPH + H(+). It participates in porphyrin-containing compound metabolism; protoporphyrin-IX biosynthesis; 5-aminolevulinate from L-glutamyl-tRNA(Glu): step 1/2. Its function is as follows. Catalyzes the NADPH-dependent reduction of glutamyl-tRNA(Glu) to glutamate 1-semialdehyde (GSA). In Methanothermobacter marburgensis (strain ATCC BAA-927 / DSM 2133 / JCM 14651 / NBRC 100331 / OCM 82 / Marburg) (Methanobacterium thermoautotrophicum), this protein is Glutamyl-tRNA reductase (hemA).